We begin with the raw amino-acid sequence, 364 residues long: Probable dual-specificity RNA methyltransferase RlmN (364 aa).

Catalysis depends on Glu-107, which acts as the Proton acceptor. A Radical SAM core domain is found at His-113–Asp-346. Cysteines 120 and 351 form a disulfide. 3 residues coordinate [4Fe-4S] cluster: Cys-127, Cys-131, and Cys-134. Residues Gly-177–Glu-178, Ser-209, Ser-232–His-234, and Asn-308 contribute to the S-adenosyl-L-methionine site. The active-site S-methylcysteine intermediate is Cys-351.

It belongs to the radical SAM superfamily. RlmN family. The cofactor is [4Fe-4S] cluster.

It is found in the cytoplasm. It catalyses the reaction adenosine(2503) in 23S rRNA + 2 reduced [2Fe-2S]-[ferredoxin] + 2 S-adenosyl-L-methionine = 2-methyladenosine(2503) in 23S rRNA + 5'-deoxyadenosine + L-methionine + 2 oxidized [2Fe-2S]-[ferredoxin] + S-adenosyl-L-homocysteine. It carries out the reaction adenosine(37) in tRNA + 2 reduced [2Fe-2S]-[ferredoxin] + 2 S-adenosyl-L-methionine = 2-methyladenosine(37) in tRNA + 5'-deoxyadenosine + L-methionine + 2 oxidized [2Fe-2S]-[ferredoxin] + S-adenosyl-L-homocysteine. Specifically methylates position 2 of adenine 2503 in 23S rRNA and position 2 of adenine 37 in tRNAs. Confers resistance to some classes of antibiotics. In Staphylococcus haemolyticus (strain JCSC1435), this protein is Probable dual-specificity RNA methyltransferase RlmN.